The primary structure comprises 152 residues: Alpha-amylase inhibitor BDAI-1 (152 aa).

The first 30 residues, 1-30, serve as a signal peptide directing secretion; the sequence is MGAMWMKSMLLVLLLCMLMVTPMTGARSDN.

The protein belongs to the protease inhibitor I6 (cereal trypsin/alpha-amylase inhibitor) family. Homodimer. Five disulfide bonds, which are essential for the inhibitor activity, are probably present. Endosperm.

It localises to the secreted. Could be involved in insect defense mechanisms. Inhibits insect-type alpha-amylase. The polypeptide is Alpha-amylase inhibitor BDAI-1 (IAD1) (Hordeum vulgare (Barley)).